We begin with the raw amino-acid sequence, 203 residues long: Membrane-spanning 4-domains subfamily A member 13 (203 aa).

4 consecutive transmembrane segments (helical) span residues 15–35 (VLGVIQIMIGIYHVLMWYFLL), 56–76 (MGTSLWGFAFVISGAFTVKAA), 84–104 (ILCTMSLNILCIIITIVAASL), and 141–161 (FAIALLYSISSCAYLPLSSIV).

Belongs to the MS4A family.

It localises to the membrane. May be involved in signal transduction as a component of a multimeric receptor complex. The chain is Membrane-spanning 4-domains subfamily A member 13 (Ms4a13) from Mus musculus (Mouse).